A 629-amino-acid polypeptide reads, in one-letter code: Transferrin (629 aa).

The first 21 residues, 1 to 21 (MTIKNVLKLAALLGVLALVQA), serve as a signal peptide directing secretion. Transferrin-like domains lie at 26–366 (YRMC…ERDG) and 372–621 (MKMC…GLKC). 2 disulfides stabilise this stretch: Cys29–Cys63 and Cys38–Cys54. Tyr111 serves as a coordination point for Fe(3+). 6 disulfide bridges follow: Cys135/Cys231, Cys184/Cys210, Cys207/Cys216, Cys270/Cys283, Cys375/Cys409, and Cys385/Cys403. Positions 137, 141, 143, and 144 each coordinate hydrogencarbonate. A Fe(3+)-binding site is contributed by Tyr225. 2 residues coordinate Fe(3+): Asp408 and His561.

The protein belongs to the transferrin family. In terms of assembly, monomer.

Transferrins are iron binding transport proteins which bind Fe(3+) ion in association with the binding of an anion, usually bicarbonate. This transferrin binds only one Fe(3+) ion per protein molecule. Transports iron ions from the hemolymph into the eggs during the vitellogenic stage (oogenesis). This Sarcophaga peregrina (Flesh fly) protein is Transferrin.